A 494-amino-acid polypeptide reads, in one-letter code: Ankyrin repeat domain-containing protein 33B (494 aa).

Positions 1 to 80 are disordered; that stretch reads MVLLAGTGPE…SAESVPEGVP (80 aa). A compositionally biased stretch (acidic residues) spans 30–42; that stretch reads VEEDPADYEEFED. 5 ANK repeats span residues 84–113, 120–150, 154–183, 189–218, and 223–255; these read PETA…SVEE, NGRT…DVNW, EGNT…GLDL, FGFT…DVHA, and RGMS…PEQF. The segment at 349–494 is disordered; that stretch reads RAARGPQAQE…RRTAPWKKRT (146 aa). The segment covering 371–382 has biased composition (basic and acidic residues); the sequence is TGQEDADSREGS. S405 is modified (phosphoserine). Composition is skewed to basic and acidic residues over residues 440–451 and 459–487; these read RPARKGSTKDSG and RYKE…ERRT. A coiled-coil region spans residues 459-488; that stretch reads RYKEAKEEKRKAEEAEKKRQAEAQKERRTA.

The polypeptide is Ankyrin repeat domain-containing protein 33B (ANKRD33B) (Homo sapiens (Human)).